Here is a 756-residue protein sequence, read N- to C-terminus: Xylosyl- and glucuronyltransferase LARGE1 (756 aa).

At 1-10 (MLGICRGRRK) the chain is on the cytoplasmic side. The chain crosses the membrane as a helical; Signal-anchor for type II membrane protein span at residues 11-31 (FLAASLTLLCIPAITWIYLFA). Residues 32–756 (GSFEDGKPVS…LKYLTAENNS (725 aa)) are Lumenal-facing. Disordered stretches follow at residues 43 to 64 (SPLE…ERES) and 82 to 108 (QLSL…EEGT). Residues 44–58 (PLESQAHSPRYTASS) show a composition bias toward polar residues. A coiled-coil region spans residues 53-95 (RYTASSQRERESLEVRVREVEEENRALRRQLSLAQGQSPAHHR). Asparagine 97, asparagine 122, and asparagine 148 each carry an N-linked (GlcNAc...) asparagine glycan. Residues 138-413 (IHVAIVCAGY…FLEYDGNLLR (276 aa)) are xylosyltransferase activity. Mn(2+)-binding residues include aspartate 242 and aspartate 244. Asparagine 272 carries an N-linked (GlcNAc...) asparagine glycan. Residues 414 to 756 (RELFGCPSET…LKYLTAENNS (343 aa)) are glucuronyltransferase activity. Residues aspartate 563 and aspartate 565 each coordinate Mn(2+).

It in the C-terminal section; belongs to the glycosyltransferase 49 family. This sequence in the N-terminal section; belongs to the glycosyltransferase 8 family. Interacts with DAG1 (via the N-terminal domain of alpha-DAG1); the interaction increases binding of DAG1 to laminin. Interacts with B4GAT1. Requires Mn(2+) as cofactor. In terms of tissue distribution, ubiquitous. Highest expression in heart, diaphragm and brain, where it is especially found in cerebral cortex, hippocampus, and trigeminal ganglion.

Its subcellular location is the golgi apparatus membrane. It carries out the reaction 3-O-[beta-D-GlcA-(1-&gt;3)-beta-D-Xyl-(1-&gt;4)-Rib-ol-P-Rib-ol-P-3-beta-D-GalNAc-(1-&gt;3)-beta-D-GlcNAc-(1-&gt;4)-(O-6-P-alpha-D-Man)]-Thr-[protein] + UDP-alpha-D-xylose = 3-O-[alpha-D-Xyl-(1-&gt;3)-beta-D-GlcA-(1-&gt;4)-beta-D-Xyl-(1-&gt;4)-Rib-ol-P-Rib-ol-P-3-beta-D-GalNAc-(1-&gt;3)-beta-D-GlcNAc-(1-&gt;4)-(O-6-P-alpha-D-Man)]-Thr-[protein] + UDP + H(+). The enzyme catalyses 3-O-{(1-&gt;[3)-alpha-D-Xyl-(1-&gt;3)-beta-D-GlcA-(1-&gt;](n)-4)-beta-D-Xyl-(1-&gt;4)-Rib-ol-P-Rib-ol-P-3-beta-D-GalNAc-(1-&gt;3)-beta-D-GlcNAc-(1-&gt;4)-O-6-P-alpha-D-Man}-L-Thr-[protein] + UDP-alpha-D-glucuronate = 3-O-{beta-D-GlcA-(1-&gt;[3)-alpha-D-Xyl-(1-&gt;3)-beta-D-GlcA-(1-&gt;](n)-4)-beta-D-Xyl-(1-&gt;4)-Rib-ol-P-Rib-ol-P-3-beta-D-GalNAc-(1-&gt;3)-beta-D-GlcNAc-(1-&gt;4)-O-6-P-alpha-D-Man}-L-Thr-[protein] + UDP + H(+). It catalyses the reaction 3-O-{beta-D-GlcA-(1-&gt;[3)-alpha-D-Xyl-(1-&gt;3)-beta-D-GlcA-(1-&gt;](n)-4)-beta-D-Xyl-(1-&gt;4)-Rib-ol-P-Rib-ol-P-3-beta-D-GalNAc-(1-&gt;3)-beta-D-GlcNAc-(1-&gt;4)-O-6-P-alpha-D-Man}-L-Thr-[protein] + UDP-alpha-D-xylose = 3-O-{(1-&gt;[3)-alpha-D-Xyl-(1-&gt;3)-beta-D-GlcA-(1-&gt;](n+1)-4)-beta-D-Xyl-(1-&gt;4)-Rib-ol-P-Rib-ol-P-3-beta-D-GalNAc-(1-&gt;3)-beta-D-GlcNAc-(1-&gt;4)-O-6-P-alpha-D-Man}-L-Thr-[protein] + UDP + H(+). It participates in protein modification; protein glycosylation. Functionally, bifunctional glycosyltransferase with both alpha-1,3-xylosyltransferase and beta-1,3-glucuronyltransferase activities involved in the maturation of alpha-dystroglycan (DAG1) by glycosylation leading to DAG1 binding to laminin G-like domain-containing extracellular proteins with high affinity. Elongates the glucuronyl-beta-1,4-xylose-beta disaccharide primer structure initiated by B4GAT1 by adding repeating units [-3-Xylose-alpha-1,3-GlcA-beta-1-] to produce a heteropolysaccharide. Requires the phosphorylation of core M3 (O-mannosyl trisaccharide) by POMK to elongate the glucuronyl-beta-1,4-xylose-beta disaccharide primer. Plays a key role in skeletal muscle function and regeneration. The chain is Xylosyl- and glucuronyltransferase LARGE1 from Mus musculus (Mouse).